The following is a 1030-amino-acid chain: MRSEALLLYFTLLHFAGAGFPEDSEPISISHGNYTKQYPVFVGHKPGRNTTQRHRLDIQMIMIMNGTLYIAARDHIYTVDIDTSHTEEIYCSKKLTWKSRQADVDTCRMKGKHKDECHNFIKVLLKKNDDALFVCGTNAFNPSCRNYKMDTLEPFGDEFSGMARCPYDAKHANVALFADGKLYSATVTDFLAIDAVIYRSLGESPTLRTVKHDSKWLKEPYFVQAVDYGDYIYFFFREIAVEYNTMGKVVFPRVAQVCKNDMGGSQRVLEKQWTSFLKARLNCSVPGDSHFYFNILQAVTDVIRINGRDVVLATFSTPYNSIPGSAVCAYDMLDIASVFTGRFKEQKSPDSTWTPVPDERVPKPRPGCCAGSSSLERYATSNEFPDDTLNFIKTHPLMDEAVPSIFNRPWFLRTMVRYRLTKIAVDTAAGPYQNHTVVFLGSEKGIILKFLARIGNSGFLNDSLFLEEMSVYNSEKCSYDGVEDKRIMGMQLDRASSSLYVAFSTCVIKVPLGRCERHGKCKKTCIASRDPYCGWIKEGGACSHLSPNSRLTFEQDIERGNTDGLGDCHNSFVALNGHSSSLLPSTTTSDSTAQEGYESRGGMLDWKHLLDSPDSTDPLGAVSSHNHQDKKGVIRESYLKGHDQLVPVTLLAIAVILAFVMGAVFSGITVYCVCDHRRKDVAVVQRKEKELTHSRRGSMSSVTKLSGLFGDTQSKDPKPEAILTPLMHNGKLATPGNTAKMLIKADQHHLDLTALPTPESTPTLQQKRKPSRGSREWERNQNLINACTKDMPPMGSPVIPTDLPLRASPSHIPSVVVLPITQQGYQHEYVDQPKMSEVAQMALEDQAATLEYKTIKEHLSSKSPNHGVNLVENLDSLPPKVPQREASLGPPGASLSQTGLSKRLEMHHSSSYGVDYKRSYPTNSLTRSHQATTLKRNNTNSSNSSHLSRNQSFGRGDNPPPAPQRVDSIQVHSSQPSGQAVTVSRQPSLNAYNSLTRSGLKRTPSLKPDVPPKPSFAPLSTSMKPNDACT.

Positions 1-18 (MRSEALLLYFTLLHFAGA) are cleaved as a signal peptide. The Extracellular portion of the chain corresponds to 19–649 (GFPEDSEPIS…KGHDQLVPVT (631 aa)). The 489-residue stretch at 24–512 (SEPISISHGN…FSTCVIKVPL (489 aa)) folds into the Sema domain. N33, N49, and N65 each carry an N-linked (GlcNAc...) asparagine glycan. Cystine bridges form between C107/C117, C135/C144, C258/C369, and C283/C328. A glycan (N-linked (GlcNAc...) asparagine) is linked at N282. N-linked (GlcNAc...) asparagine glycosylation is found at N434 and N461. 4 disulfide bridges follow: C477–C506, C515–C533, C521–C568, and C525–C542. The chain crosses the membrane as a helical span at residues 650–670 (LLAIAVILAFVMGAVFSGITV). Over 671-1030 (YCVCDHRRKD…TSMKPNDACT (360 aa)) the chain is Cytoplasmic. At S698 the chain carries Phosphoserine. 3 disordered regions span residues 754–778 (ALPT…REWE), 860–897 (SSKS…SLSQ), and 912–1030 (YGVD…DACT). Polar residues predominate over residues 920-936 (YPTNSLTRSHQATTLKR). Over residues 937-952 (NNTNSSNSSHLSRNQS) the composition is skewed to low complexity. S952 is subject to Phosphoserine. 2 stretches are compositionally biased toward polar residues: residues 970–997 (QVHS…SLTR) and 1018–1030 (PLST…DACT).

Belongs to the semaphorin family. Active as a homodimer or oligomer. The SEMA6A homodimer interacts with a PLXNA2 homodimer, giving rise to a heterotetramer. Interacts with EVL. As to quaternary structure, (Microbial infection) Interacts with P.sordellii toxin TcsL; semaphorins SEMA6A and SEMA6B constitute the major host receptors for TcsL in the vascular endothelium.

The protein resides in the cell membrane. Its function is as follows. Cell surface receptor for PLXNA2 that plays an important role in cell-cell signaling. Required for normal granule cell migration in the developing cerebellum. Promotes reorganization of the actin cytoskeleton and plays an important role in axon guidance in the developing central nervous system. Can act as repulsive axon guidance cue. Has repulsive action towards migrating granular neurons. May play a role in channeling sympathetic axons into the sympathetic chains and controlling the temporal sequence of sympathetic target innervation. (Microbial infection) Acts as a receptor for P.sordellii toxin TcsL in the in the vascular endothelium. The protein is Semaphorin-6A (SEMA6A) of Homo sapiens (Human).